We begin with the raw amino-acid sequence, 163 residues long: Putative 4-hydroxy-4-methyl-2-oxoglutarate aldolase (163 aa).

Substrate-binding positions include 76-79 and Arg-98; that span reads GDML. Asp-99 contacts a divalent metal cation.

Belongs to the class II aldolase/RraA-like family. In terms of assembly, homotrimer. A divalent metal cation is required as a cofactor.

The catalysed reaction is 4-hydroxy-4-methyl-2-oxoglutarate = 2 pyruvate. The enzyme catalyses oxaloacetate + H(+) = pyruvate + CO2. In terms of biological role, catalyzes the aldol cleavage of 4-hydroxy-4-methyl-2-oxoglutarate (HMG) into 2 molecules of pyruvate. Also contains a secondary oxaloacetate (OAA) decarboxylase activity due to the common pyruvate enolate transition state formed following C-C bond cleavage in the retro-aldol and decarboxylation reactions. This Pseudomonas fluorescens (strain ATCC BAA-477 / NRRL B-23932 / Pf-5) protein is Putative 4-hydroxy-4-methyl-2-oxoglutarate aldolase.